Here is a 626-residue protein sequence, read N- to C-terminus: Chaperone protein HtpG (626 aa).

Residues 1–339 (MSQNQETRGF…SNDLPLNVSR (339 aa)) form an a; substrate-binding region. Positions 340-555 (EILQDNKITA…NDQMTTQMAK (216 aa)) are b. Positions 556–626 (LFAAAGQPVP…FIKRINKLLG (71 aa)) are c.

Belongs to the heat shock protein 90 family. As to quaternary structure, homodimer.

The protein resides in the cytoplasm. Molecular chaperone. Has ATPase activity. The sequence is that of Chaperone protein HtpG from Haemophilus influenzae (strain PittEE).